Consider the following 244-residue polypeptide: 5-oxoprolinase subunit A (244 aa).

Belongs to the LamB/PxpA family. As to quaternary structure, forms a complex composed of PxpA, PxpB and PxpC.

The enzyme catalyses 5-oxo-L-proline + ATP + 2 H2O = L-glutamate + ADP + phosphate + H(+). Its function is as follows. Catalyzes the cleavage of 5-oxoproline to form L-glutamate coupled to the hydrolysis of ATP to ADP and inorganic phosphate. The sequence is that of 5-oxoprolinase subunit A from Shigella flexneri.